A 431-amino-acid chain; its full sequence is MLSQTNDAFFTRSLADSDPEIFGAIEKELGRQRHEIELIASENIVSRAVLEAQGSIMTNKYAEGYPGKRYYGGCQYVDIAEALAIERAKKLFGVNFANVQPNSGSQMNQAVFLALLQPGDTFMGLDLNSGGHLTHGSPVNMSGKWFNVVSYGVREDDHLLDMDEVARKAREQKPKLIIAGGTAYSRIWDWKRFREIADEVGAWLMVDMAHIAGLVAGGQHPSPFPHCHVATTTTHKSLRGPRGGMILTNDEEIAKKINSAVFPGLQGGPLMHVIAAKAVALGEALQPSFKDYAAQVVKNARTLAETLKANGLDIVSGGTDNHLMLVDLRKKNATGKRAEAALGRAYVTCNKNGIPFDPEKPFVTSGVRLGAPAGTTRGFKEAEFKEVGELIVEVLDGLKAANSDEGNAAVEAGVREKVIKLTDRFPMYGYM.

Residues L127 and 131-133 (GHL) contribute to the (6S)-5,6,7,8-tetrahydrofolate site. K236 is modified (N6-(pyridoxal phosphate)lysine). Residue E252 participates in (6S)-5,6,7,8-tetrahydrofolate binding.

The protein belongs to the SHMT family. Homodimer. Pyridoxal 5'-phosphate is required as a cofactor.

The protein localises to the cytoplasm. The enzyme catalyses (6R)-5,10-methylene-5,6,7,8-tetrahydrofolate + glycine + H2O = (6S)-5,6,7,8-tetrahydrofolate + L-serine. It functions in the pathway one-carbon metabolism; tetrahydrofolate interconversion. Its pathway is amino-acid biosynthesis; glycine biosynthesis; glycine from L-serine: step 1/1. Its function is as follows. Catalyzes the reversible interconversion of serine and glycine with tetrahydrofolate (THF) serving as the one-carbon carrier. This reaction serves as the major source of one-carbon groups required for the biosynthesis of purines, thymidylate, methionine, and other important biomolecules. Also exhibits THF-independent aldolase activity toward beta-hydroxyamino acids, producing glycine and aldehydes, via a retro-aldol mechanism. The protein is Serine hydroxymethyltransferase 1 of Rhizobium meliloti (strain 1021) (Ensifer meliloti).